The chain runs to 235 residues: MRPSGRNNDQLRTLKVTHNFTKHAEGSVLIEFGDTKVLCTASVVAGVPRFKKDSGEGWLTAEYGMLPRSTHTRMDREAARGKQSGRTQEIQRLIGRALRASVDLTKIGENTIKVDCDVIQADGGTRTASITGASLAIRDAIDYMKQNGMLDEQTSPLMSQVAAISVGIFNNEPVLDLDYDEDSNAETDMNVVMNSNGGMIEIQGTAEGKDFSEEEFAKMLGLAKKGIKEIFESIF.

Phosphate-binding positions include Arg86 and 124–126; that span reads GTR.

This sequence belongs to the RNase PH family. As to quaternary structure, homohexameric ring arranged as a trimer of dimers.

It catalyses the reaction tRNA(n+1) + phosphate = tRNA(n) + a ribonucleoside 5'-diphosphate. Phosphorolytic 3'-5' exoribonuclease that plays an important role in tRNA 3'-end maturation. Removes nucleotide residues following the 3'-CCA terminus of tRNAs; can also add nucleotides to the ends of RNA molecules by using nucleoside diphosphates as substrates, but this may not be physiologically important. Probably plays a role in initiation of 16S rRNA degradation (leading to ribosome degradation) during starvation. The chain is Ribonuclease PH from Francisella philomiragia subsp. philomiragia (strain ATCC 25017 / CCUG 19701 / FSC 153 / O#319-036).